Consider the following 1063-residue polypeptide: JmjC domain-containing histone demethylation protein 1 (1063 aa).

The JmjC domain occupies 86-266 (LYNVLSLEYS…TQLRVYQVEN (181 aa)). Threonine 160 serves as a coordination point for substrate. Histidine 163 and aspartate 165 together coordinate Fe cation. Lysine 180 is a binding site for substrate. Residue histidine 234 coordinates Fe cation. Acidic residues predominate over residues 379-389 (GLEEEAEDEDV). 3 disordered regions span residues 379 to 400 (GLEE…AEER), 554 to 750 (ESDE…NPYN), and 776 to 1040 (VELH…KRAK). The span at 390 to 400 (KPETKKEAEER) shows a compositional bias: basic and acidic residues. Composition is skewed to acidic residues over residues 594–605 (PEYDEDMEEYDP) and 613–631 (ELEE…EEEY). The segment covering 636–646 (TRRSSTRGSAS) has biased composition (low complexity). Basic and acidic residues-rich tracts occupy residues 647–665 (TKEE…PKKE), 674–712 (EKSS…ELRA), 776–806 (VELH…HEDS), 813–835 (PYDR…DSHR), and 892–902 (EPRRSNDRRTS). The segment covering 926–937 (AEAASASSSRHS) has biased composition (low complexity). 2 stretches are compositionally biased toward polar residues: residues 950 to 963 (LNSS…TPMY) and 973 to 982 (WLPNTSNVTR). Positions 1005-1016 (PPFPRSITPPPV) are enriched in pro residues. The segment covering 1020–1030 (ELKSQSNGRKS) has biased composition (polar residues). Over residues 1031–1040 (NYSEDGKRAK) the composition is skewed to basic and acidic residues.

This sequence belongs to the JHDM1 histone demethylase family. The cofactor is Fe(2+).

It is found in the nucleus. It carries out the reaction N(6),N(6)-dimethyl-L-lysyl(36)-[histone H3] + 2 2-oxoglutarate + 2 O2 = L-lysyl(36)-[histone H3] + 2 formaldehyde + 2 succinate + 2 CO2. Histone demethylase that specifically demethylates 'Lys-36' of histone H3, thereby playing a central role in histone code. The protein is JmjC domain-containing histone demethylation protein 1 (jhdm-1) of Caenorhabditis briggsae.